Reading from the N-terminus, the 423-residue chain is Gamma-glutamyl phosphate reductase (423 aa).

This sequence belongs to the gamma-glutamyl phosphate reductase family.

It localises to the cytoplasm. The catalysed reaction is L-glutamate 5-semialdehyde + phosphate + NADP(+) = L-glutamyl 5-phosphate + NADPH + H(+). Its pathway is amino-acid biosynthesis; L-proline biosynthesis; L-glutamate 5-semialdehyde from L-glutamate: step 2/2. In terms of biological role, catalyzes the NADPH-dependent reduction of L-glutamate 5-phosphate into L-glutamate 5-semialdehyde and phosphate. The product spontaneously undergoes cyclization to form 1-pyrroline-5-carboxylate. In Burkholderia pseudomallei (strain 1710b), this protein is Gamma-glutamyl phosphate reductase.